Consider the following 499-residue polypeptide: Lysine--tRNA ligase (499 aa).

Residues glutamate 410 and glutamate 417 each contribute to the Mg(2+) site.

It belongs to the class-II aminoacyl-tRNA synthetase family. In terms of assembly, homodimer. Mg(2+) serves as cofactor.

The protein localises to the cytoplasm. The enzyme catalyses tRNA(Lys) + L-lysine + ATP = L-lysyl-tRNA(Lys) + AMP + diphosphate. This is Lysine--tRNA ligase (lysS) from Bacillus subtilis (strain 168).